Consider the following 424-residue polypeptide: Folate-like transporter 2 (424 aa).

Residue Asn35 is glycosylated (N-linked (GlcNAc...) asparagine). The next 6 membrane-spanning stretches (helical) occupy residues 48-68 (IWTY…DVFL), 71-91 (PLLV…VFGK), 99-119 (LEVF…YIYV), 136-156 (ALLV…GLNW), 164-184 (IISL…PGVE), and 233-253 (PLIL…YQVT). Asn254 carries N-linked (GlcNAc...) asparagine glycosylation. Transmembrane regions (helical) follow at residues 299 to 319 (WGDL…FWMS), 324 to 344 (IVVL…TTTI), 361 to 381 (LFGI…AVVI), and 392 to 412 (FVVY…IFGI).

It belongs to the reduced folate carrier (RFC) transporter (TC 2.A.48) family.

The protein resides in the membrane. Unlike folt-1, does not appear to act as a folate transporter. The sequence is that of Folate-like transporter 2 (folt-2) from Caenorhabditis elegans.